The sequence spans 279 residues: Undecaprenyl-diphosphatase (279 aa).

The next 8 helical transmembrane spans lie at 2 to 22 (LIIE…TEWL), 44 to 64 (AFIE…VMLI), 85 to 105 (WQLW…AVPL), 113 to 133 (FYFM…FIWI), 163 to 183 (VLSI…AIIL), 188 to 208 (TVAA…YSGL), 223 to 243 (AQVL…LLAI), and 255 to 275 (FTIF…YSFF).

This sequence belongs to the UppP family.

It is found in the cell membrane. The enzyme catalyses di-trans,octa-cis-undecaprenyl diphosphate + H2O = di-trans,octa-cis-undecaprenyl phosphate + phosphate + H(+). Catalyzes the dephosphorylation of undecaprenyl diphosphate (UPP). Confers resistance to bacitracin. The protein is Undecaprenyl-diphosphatase of Streptococcus pyogenes serotype M2 (strain MGAS10270).